We begin with the raw amino-acid sequence, 118 residues long: Secreted effector CSEP0064 (118 aa).

An N-terminal signal peptide occupies residues 1–21; it reads MRPFQLLSALAIFINLEAVEA. A disulfide bond links cysteine 27 and cysteine 113.

As to quaternary structure, interacts in planta with the pathogenesis-related protein PR10.

It is found in the secreted. The protein localises to the host cell. In terms of biological role, secreted effector that increases susceptibility to infection in both monocotyledonous and dicotyledonous plants. Non-catalytic homolog of fungal RNases that binds host RNA and inhibits the degradation of host ribosomal RNA induced by ribosome-inactivating proteins (RIPs), preventing host cell death, an inviable interaction and demise of the fungus. In Blumeria graminis f. sp. hordei (strain DH14) (Barley powdery mildew), this protein is Secreted effector CSEP0064.